The following is a 794-amino-acid chain: Solute carrier family 26 member 9 (794 aa).

Residues methionine 1–asparagine 70 are Cytoplasmic-facing. Residues leucine 71–alanine 96 form a helical membrane-spanning segment. The Extracellular segment spans residues asparagine 97–proline 100. The chain crosses the membrane as a helical span at residues valine 101–phenylalanine 109. Residues proline 110–alanine 129 are Cytoplasmic-facing. A helical transmembrane segment spans residues valine 130 to leucine 142. Residues alanine 143–isoleucine 160 are Extracellular-facing. The helical transmembrane segment at glutamate 161–glutamine 189 threads the bilayer. Topologically, residues phenylalanine 190–glutamate 199 are cytoplasmic. The helical transmembrane segment at serine 200–phenylalanine 222 threads the bilayer. Over glycine 223 to isoleucine 235 the chain is Extracellular. An intramembrane region (helical) is located at residues isoleucine 236–lysine 244. At glutamate 245–alanine 252 the chain is on the extracellular side. Residues serine 253–lysine 273 traverse the membrane as a helical segment. Residues phenylalanine 274 to methionine 284 lie on the Cytoplasmic side of the membrane. The helical transmembrane segment at glutamate 285–glycine 297 threads the bilayer. At serine 298–valine 332 the chain is on the extracellular side. A helical membrane pass occupies residues glycine 333–lysine 356. The Cytoplasmic portion of the chain corresponds to histidine 357–alanine 363. A helical membrane pass occupies residues asparagine 364 to glycine 377. Over serine 378 to alanine 388 the chain is Extracellular. The chain crosses the membrane as a helical span at residues leucine 389–alanine 398. Topologically, residues glycine 399 to glutamine 403 are cytoplasmic. Residues isoleucine 404–isoleucine 417 traverse the membrane as a helical segment. At leucine 418 to lysine 429 the chain is on the extracellular side. Residues serine 430–lysine 455 form a helical membrane-spanning segment. The Cytoplasmic portion of the chain corresponds to lysine 456–leucine 459. The chain crosses the membrane as a helical span at residues aspartate 460–leucine 474. Residues glycine 475 to proline 477 lie on the Extracellular side of the membrane. The helical transmembrane segment at tyrosine 478 to glutamine 496 threads the bilayer. Topologically, residues phenylalanine 497–leucine 794 are cytoplasmic. The STAS domain maps to valine 517 to alanine 739.

The protein belongs to the SLC26A/SulP transporter (TC 2.A.53) family. As to quaternary structure, homodimer.

Its subcellular location is the cell membrane. The protein localises to the endomembrane system. The catalysed reaction is chloride(in) = chloride(out). It catalyses the reaction hydrogencarbonate(in) + chloride(out) = hydrogencarbonate(out) + chloride(in). With respect to regulation, inhibited by ammonium and thiosulfate. Its function is as follows. Ion transporter that can act both as an ion channel and anion exchanger. Mainly acts as a chloride channel, which mediate uncoupled chloride anion transport in an alternate-access mechanism where a saturable binding site is alternately exposed to either one or the other side of the membrane. Also acts as a DIDS- and thiosulfate- sensitive anion exchanger the exchange of chloride for bicarbonate ions across the cell membrane. The polypeptide is Solute carrier family 26 member 9 (slc26a9) (Xenopus tropicalis (Western clawed frog)).